The primary structure comprises 315 residues: Probable serine acetyltransferase 4 (315 aa).

The interval 287–315 (AKPIIGKKAAPQRRPEELPGVTMEQRWSD) is disordered.

The protein belongs to the transferase hexapeptide repeat family. In terms of assembly, homomultimer.

It catalyses the reaction L-serine + acetyl-CoA = O-acetyl-L-serine + CoA. It functions in the pathway amino-acid biosynthesis; L-cysteine biosynthesis; L-cysteine from L-serine: step 1/2. The polypeptide is Probable serine acetyltransferase 4 (SAT4) (Oryza sativa subsp. japonica (Rice)).